The chain runs to 138 residues: Putative phosphatidylinositol 3,4,5-trisphosphate 3-phosphatase TPTE2P1 (138 aa).

The C2 tensin-type domain maps to 1 to 75 (MPAAFPCVFP…FAVEILFGMV (75 aa)).

The chain is Putative phosphatidylinositol 3,4,5-trisphosphate 3-phosphatase TPTE2P1 (TPTE2P1) from Homo sapiens (Human).